The chain runs to 147 residues: MASLRLFLLCLAGLIFASEAGPGGAGESKCPLMVKVLDAVRGSPAVDVAVKVFKKTADGSWEPFASGKTAESGELHGLTTDEKFTEGVYRVELDTKSYWKALGISPFHEYAEVVFTANDSGHRHYTIAALLSPYSYSTTAVVSNPQN.

Positions 1 to 20 (MASLRLFLLCLAGLIFASEA) are cleaved as a signal peptide. Cys-30 carries the sulfocysteine modification. Lys-35 contacts L-thyroxine. Glu-62 carries the post-translational modification 4-carboxyglutamate. Ser-72 is subject to Phosphoserine. Glu-74 serves as a coordination point for L-thyroxine. An N-linked (GlcNAc...) asparagine glycan is attached at Asn-118. Ser-137 is a binding site for L-thyroxine.

This sequence belongs to the transthyretin family. Homotetramer. Dimer of dimers. In the homotetramer, subunits assemble around a central channel that can accommodate two ligand molecules. Interacts with RBP4. Post-translationally, sulfonation of the reactive cysteine Cys-30 enhances the stability of the native conformation of TTR, avoiding misassembly of the protein leading to amyloid formation. As to expression, detected in serum and cerebrospinal fluid (at protein level). Highly expressed in the choroid plexus. Detected at lower levels in the liver.

It localises to the secreted. Functionally, thyroid hormone-binding protein. Probably transports thyroxine from the bloodstream to the brain. The polypeptide is Transthyretin (Ttr) (Rattus norvegicus (Rat)).